The following is a 209-amino-acid chain: Probable phosphatidylglycerophosphatase, mitochondrial (209 aa).

The short motif at 57-61 (DKDNC) is the Phosphoryl acceptor element.

Belongs to the GEP4 family.

The protein resides in the mitochondrion inner membrane. The enzyme catalyses a 1,2-diacyl-sn-glycero-3-phospho-(1'-sn-glycero-3'-phosphate) + H2O = a 1,2-diacyl-sn-glycero-3-phospho-(1'-sn-glycerol) + phosphate. Its pathway is phospholipid metabolism; phosphatidylglycerol biosynthesis; phosphatidylglycerol from CDP-diacylglycerol: step 2/2. In terms of biological role, phosphatidylglycerophosphatase involved in the biosynthesis of cardiolipin (CL), a unique dimeric phosphoglycerolipid predominantly present in mitochondrial membranes and which has important functions for cellular energy metabolism, mitochondrial dynamics and the initiation of apoptotic pathways. The polypeptide is Probable phosphatidylglycerophosphatase, mitochondrial (gep4) (Schizosaccharomyces pombe (strain 972 / ATCC 24843) (Fission yeast)).